The sequence spans 438 residues: Transposon Ty2-F Gag polyprotein (438 aa).

Polar residues-rich tracts occupy residues 1–11 (MESQQLHQNPH), 19–39 (ASVT…SASN), and 49–60 (KVNSQQETTPGT). 3 disordered regions span residues 1–86 (MESQ…GQYQ), 366–397 (VSRT…AKAH), and 419–438 (SSQY…TERI). The RNA-binding stretch occupies residues 295 to 397 (ENNINVSDRL…SSKPRAAKAH (103 aa)). The segment covering 369-381 (TSPNTTNTKVTTR) has biased composition (low complexity).

In terms of assembly, homotrimer.

It is found in the cytoplasm. Capsid protein (CA) is the structural component of the virus-like particle (VLP), forming the shell that encapsulates the retrotransposons dimeric RNA genome. The particles are assembled from trimer-clustered units and there are holes in the capsid shells that allow for the diffusion of macromolecules. CA also has nucleocapsid-like chaperone activity, promoting primer tRNA(i)-Met annealing to the multipartite primer-binding site (PBS), dimerization of Ty2 RNA and initiation of reverse transcription. In Saccharomyces cerevisiae (strain ATCC 204508 / S288c) (Baker's yeast), this protein is Transposon Ty2-F Gag polyprotein (TY2A-F).